The sequence spans 260 residues: Adenosylcobinamide-GDP ribazoletransferase (260 aa).

Helical transmembrane passes span 40-60 (AFPL…FMAY), 64-84 (LPPL…TGAL), 117-137 (FAAL…MTII), 192-212 (GIGL…LSLI), 214-234 (ALVL…AKIG), and 240-260 (TLGA…VMAL).

Belongs to the CobS family. It depends on Mg(2+) as a cofactor.

Its subcellular location is the cell inner membrane. The catalysed reaction is alpha-ribazole + adenosylcob(III)inamide-GDP = adenosylcob(III)alamin + GMP + H(+). The enzyme catalyses alpha-ribazole 5'-phosphate + adenosylcob(III)inamide-GDP = adenosylcob(III)alamin 5'-phosphate + GMP + H(+). The protein operates within cofactor biosynthesis; adenosylcobalamin biosynthesis; adenosylcobalamin from cob(II)yrinate a,c-diamide: step 7/7. Joins adenosylcobinamide-GDP and alpha-ribazole to generate adenosylcobalamin (Ado-cobalamin). Also synthesizes adenosylcobalamin 5'-phosphate from adenosylcobinamide-GDP and alpha-ribazole 5'-phosphate. The sequence is that of Adenosylcobinamide-GDP ribazoletransferase from Brucella anthropi (strain ATCC 49188 / DSM 6882 / CCUG 24695 / JCM 21032 / LMG 3331 / NBRC 15819 / NCTC 12168 / Alc 37) (Ochrobactrum anthropi).